A 336-amino-acid chain; its full sequence is F420-dependent glucose-6-phosphate dehydrogenase (336 aa).

Asp39 serves as a coordination point for coenzyme F420-(gamma-Glu)n. The Proton donor role is filled by His40. Coenzyme F420-(gamma-Glu)n is bound by residues Thr76 and 107–108 (TG). Glu109 functions as the Proton acceptor in the catalytic mechanism. Residues Asn112, 177–178 (GG), and 180–181 (AV) each bind coenzyme F420-(gamma-Glu)n. Residues Thr195, Lys198, Lys259, and Arg283 each contribute to the substrate site.

This sequence belongs to the F420-dependent glucose-6-phosphate dehydrogenase family. As to quaternary structure, homodimer.

The catalysed reaction is oxidized coenzyme F420-(gamma-L-Glu)(n) + D-glucose 6-phosphate + H(+) = 6-phospho-D-glucono-1,5-lactone + reduced coenzyme F420-(gamma-L-Glu)(n). Its function is as follows. Catalyzes the coenzyme F420-dependent oxidation of glucose 6-phosphate (G6P) to 6-phosphogluconolactone. Appears to have a role in resistance to oxidative stress, via its consumption of G6P that serves as a source of reducing power to combat oxidative stress in mycobacteria. The chain is F420-dependent glucose-6-phosphate dehydrogenase from Mycobacterium avium (strain 104).